We begin with the raw amino-acid sequence, 319 residues long: Large ribosomal subunit protein uL10 (319 aa).

A disordered region spans residues 289–319 (EQKSAAPAAKEEAPKEDSEESDEDMGFGLFD).

This sequence belongs to the universal ribosomal protein uL10 family. In terms of assembly, P0 forms a pentameric complex by interaction with dimers of P1 and P2. Post-translationally, phosphorylated.

The protein localises to the nucleus. Its subcellular location is the cytoplasm. Its function is as follows. Ribosomal protein P0 is the functional equivalent of E.coli protein L10. The sequence is that of Large ribosomal subunit protein uL10 (rplp0) from Danio rerio (Zebrafish).